We begin with the raw amino-acid sequence, 232 residues long: Protein TIFY 10c (232 aa).

Residues 54-73 (PPAAGAGGAFRPPPTTMNLL) are disordered. One can recognise a Tify domain in the interval 114 to 149 (AGEKAQQLTIFYGGKVVVFENFPSTKVKDLLQIVST). Positions 152–177 (GVDKNTGTAATQSLPRPAHNSLPDLP) are disordered. Residues 156–165 (NTGTAATQSL) show a composition bias toward polar residues. Positions 177–202 (PIARRNSLHRFLEKRKGRMNANAPYQ) match the Jas motif. Positions 179–186 (ARRNSLHR) match the Nuclear localization signal motif.

This sequence belongs to the TIFY/JAZ family. Interacts with BHLH148. Interacts with COI1B in a coronatine-dependent manner. Coronatine is an analog of jasmonoyl isoleucine (JA-Ile). Interacts with TIFY5/JAZ2, TIFY6B/JAZ4, TIFY9/JAZ5, TIFY11A, TIFY11D/JAZ12, TIFY11G/JAZ15 and NINJA1. Ubiquitinated. Increase in jasmonoyl isoleucine (JA-Ile) levels mediates its degradation via COI1B-mediated proteasome pathway.

The protein resides in the nucleus. It is found in the cytoplasm. Its subcellular location is the cytosol. Functionally, repressor of jasmonate (JA) responses. Acts as a repressor of JA-induced resistance to the bacterial blight pathogen Xanthomonas oryzae pv. oryzae (Xoo). Regulates JA-induced accumulation of linalool at the transcriptional level of linalool synthase gene LIS. Linalool is important for resistance to bacterial blight pathogen Xoo. In Oryza sativa subsp. japonica (Rice), this protein is Protein TIFY 10c.